The sequence spans 132 residues: Small ribosomal subunit protein uS8 (132 aa).

The protein belongs to the universal ribosomal protein uS8 family. Part of the 30S ribosomal subunit. Contacts proteins S5 and S12.

Functionally, one of the primary rRNA binding proteins, it binds directly to 16S rRNA central domain where it helps coordinate assembly of the platform of the 30S subunit. The sequence is that of Small ribosomal subunit protein uS8 from Rhodospirillum centenum (strain ATCC 51521 / SW).